A 414-amino-acid polypeptide reads, in one-letter code: Putative polyketide beta-ketoacyl synthase 2 (414 aa).

One can recognise a Ketosynthase family 3 (KS3) domain in the interval 4–407 (PRRAVVTGLG…GNNSALVLRR (404 aa)).

It belongs to the thiolase-like superfamily. Beta-ketoacyl-ACP synthases family.

Functionally, involved in developmentally regulated synthesis of a compound biosynthetically related to polyketide antibiotics which is essential for spore color in Streptomyces halstedii. The protein is Putative polyketide beta-ketoacyl synthase 2 (sch2) of Streptomyces halstedii.